The chain runs to 560 residues: DNA ligase B (560 aa).

Lys124 acts as the N6-AMP-lysine intermediate in catalysis.

This sequence belongs to the NAD-dependent DNA ligase family. LigB subfamily.

The enzyme catalyses NAD(+) + (deoxyribonucleotide)n-3'-hydroxyl + 5'-phospho-(deoxyribonucleotide)m = (deoxyribonucleotide)n+m + AMP + beta-nicotinamide D-nucleotide.. In terms of biological role, catalyzes the formation of phosphodiester linkages between 5'-phosphoryl and 3'-hydroxyl groups in double-stranded DNA using NAD as a coenzyme and as the energy source for the reaction. In Escherichia coli O9:H4 (strain HS), this protein is DNA ligase B.